The primary structure comprises 114 residues: rRNA-processing protein cgrA (114 aa).

Positions 1–11 are enriched in polar residues; the sequence is MSSAIPTSSVN. Residues 1–114 are disordered; sequence MSSAIPTSSV…REKRNKLLHS (114 aa). The span at 39-93 shows a compositional bias: basic and acidic residues; the sequence is YEKRLEARKRQEAVKEHERELREEKEAERKAQIQKIKDRRAAKEEKERYEKMAEK. Residues 40-101 are a coiled coil; the sequence is EKRLEARKRQ…EKMHRKRVER (62 aa). Over residues 94-114 the composition is skewed to basic residues; the sequence is MHRKRVERLKRREKRNKLLHS.

It belongs to the CGR1 family.

It is found in the nucleus. Its subcellular location is the nucleolus. In terms of biological role, involved in nucleolar integrity and required for processing of the pre-rRNA for the 60S ribosome subunit. This Aspergillus fumigatus (strain ATCC MYA-4609 / CBS 101355 / FGSC A1100 / Af293) (Neosartorya fumigata) protein is rRNA-processing protein cgrA (cgrA).